The following is a 117-amino-acid chain: PBP1-interacting protein XAC1 (117 aa).

The tract at residues M1–L60 is disordered. Residues A32–S44 are compositionally biased toward low complexity.

In terms of assembly, forms a complex composed of at least MKT1, PBP1, XAC1 and LSM12. Forms a complex composed of at least MKT1L, PBP1, XAC1 and LSM12.

The protein resides in the cytoplasm. In terms of biological role, involved in post-transcriptional regulation of gene expression. This chain is PBP1-interacting protein XAC1, found in Trypanosoma brucei brucei (strain 927/4 GUTat10.1).